Consider the following 189-residue polypeptide: GTPase NRas (189 aa).

GTP-binding positions include 10-18 (GAGGVGKSA) and 29-30 (VD). The Effector region signature appears at 32–40 (YDPTIEDSY). Residue 57-61 (DTAGQ) coordinates GTP. Ser-89 carries the post-translational modification Phosphoserine. Residue 116–119 (NKCD) participates in GTP binding. The interval 166–185 (YRMKKLNSNDDGTQGCMGLP) is hypervariable region. A Glycyl lysine isopeptide (Lys-Gly) (interchain with G-Cter in ubiquitin) cross-link involves residue Lys-170. Cys-181 is lipidated: S-palmitoyl cysteine. Cys-186 carries the S-farnesyl cysteine lipid modification. Positions 187-189 (VVM) are cleaved as a propeptide — removed in mature form.

The protein belongs to the small GTPase superfamily. Ras family. As to quaternary structure, interacts (active GTP-bound form preferentially) with RGS14. Interacts (active GTP-bound form) with RASSF7. Interacts (active GTP-bound form) with both SHOC2 and PP1c (all isoforms) to form a tertiary complex; SHOC2 and PP1c preferably bind M-Ras/MRAS, but they also bind K-Ras/KRAS, N-Ras/NRAS and H-Ras/HRAS. Post-translationally, palmitoylated by the ZDHHC9-GOLGA7 complex. Depalmitoylated by ABHD17A, ABHD17B and ABHD17C. A continuous cycle of de- and re-palmitoylation regulates rapid exchange between plasma membrane and Golgi. In terms of processing, acetylation at Lys-104 prevents interaction with guanine nucleotide exchange factors (GEFs). Ubiquitinated by the BCR(LZTR1) E3 ubiquitin ligase complex at Lys-170 in a non-degradative manner, leading to inhibit Ras signaling by decreasing Ras association with membranes. Post-translationally, phosphorylation at Ser-89 enhances NRAS association with its downstream effectors.

The protein localises to the cell membrane. It is found in the golgi apparatus membrane. The enzyme catalyses GTP + H2O = GDP + phosphate + H(+). With respect to regulation, alternates between an inactive form bound to GDP and an active form bound to GTP. Activated by a guanine nucleotide-exchange factor (GEF) and inactivated by a GTPase-activating protein (GAP). Functionally, ras proteins bind GDP/GTP and possess intrinsic GTPase activity. This chain is GTPase NRas (NRAS), found in Cavia porcellus (Guinea pig).